A 262-amino-acid chain; its full sequence is Putative hydro-lyase RHA1_ro03475 (262 aa).

Belongs to the D-glutamate cyclase family.

The sequence is that of Putative hydro-lyase RHA1_ro03475 from Rhodococcus jostii (strain RHA1).